Consider the following 90-residue polypeptide: Large ribosomal subunit protein bL31B (90 aa).

Belongs to the bacterial ribosomal protein bL31 family. Type B subfamily. As to quaternary structure, part of the 50S ribosomal subunit.

The sequence is that of Large ribosomal subunit protein bL31B from Pseudomonas fluorescens (strain SBW25).